We begin with the raw amino-acid sequence, 426 residues long: Serine--tRNA ligase (426 aa).

230–232 (TAE) contributes to the L-serine binding site. ATP is bound at residue 261–263 (RSE). Glu-284 is an L-serine binding site. 348-351 (EISS) is an ATP binding site. Ser-384 contributes to the L-serine binding site.

It belongs to the class-II aminoacyl-tRNA synthetase family. Type-1 seryl-tRNA synthetase subfamily. Homodimer. The tRNA molecule binds across the dimer.

The protein localises to the cytoplasm. It catalyses the reaction tRNA(Ser) + L-serine + ATP = L-seryl-tRNA(Ser) + AMP + diphosphate + H(+). It carries out the reaction tRNA(Sec) + L-serine + ATP = L-seryl-tRNA(Sec) + AMP + diphosphate + H(+). The protein operates within aminoacyl-tRNA biosynthesis; selenocysteinyl-tRNA(Sec) biosynthesis; L-seryl-tRNA(Sec) from L-serine and tRNA(Sec): step 1/1. Its function is as follows. Catalyzes the attachment of serine to tRNA(Ser). Is also able to aminoacylate tRNA(Sec) with serine, to form the misacylated tRNA L-seryl-tRNA(Sec), which will be further converted into selenocysteinyl-tRNA(Sec). The protein is Serine--tRNA ligase of Erythrobacter litoralis (strain HTCC2594).